Here is a 41-residue protein sequence, read N- to C-terminus: Trypsin inhibitor 2c (41 aa).

2 cysteine pairs are disulfide-bonded: Cys-11/Cys-32 and Cys-15/Cys-28.

Its function is as follows. Inhibits bovine trypsin with a Ki of 0.174 nM and trypsin-like proteases from G.mellonella larvae. Has no activity against serine proteases chymotrypsin, subtilisin and elastase. Has no activity against cysteine proteases from beetle gut. In Fagopyrum esculentum (Common buckwheat), this protein is Trypsin inhibitor 2c.